A 633-amino-acid chain; its full sequence is Probable methyltransferase PMT15 (633 aa).

Residues 1 to 24 (MGNYRWPSKLSKLSLRAKQTNLYR) are Cytoplasmic-facing. The helical; Signal-anchor for type II membrane protein transmembrane segment at 25-45 (VILIAILCVTFYFVGVWQHSG) threads the bilayer. The Lumenal portion of the chain corresponds to 46–633 (RGISRSSISN…APAPDQSSDP (588 aa)). 2 N-linked (GlcNAc...) asparagine glycosylation sites follow: Asn-113 and Asn-298.

Belongs to the methyltransferase superfamily.

The protein resides in the golgi apparatus membrane. The sequence is that of Probable methyltransferase PMT15 from Arabidopsis thaliana (Mouse-ear cress).